A 185-amino-acid polypeptide reads, in one-letter code: Ribosome-recycling factor (185 aa).

Belongs to the RRF family.

Its subcellular location is the cytoplasm. Functionally, responsible for the release of ribosomes from messenger RNA at the termination of protein biosynthesis. May increase the efficiency of translation by recycling ribosomes from one round of translation to another. This Streptococcus pneumoniae serotype 2 (strain D39 / NCTC 7466) protein is Ribosome-recycling factor.